A 574-amino-acid polypeptide reads, in one-letter code: 5'-nucleotidase (574 aa).

Residues M1–P26 form the signal peptide. The Zn(2+) site is built by D36 and H38. C51 and C57 are oxidised to a cystine. N-linked (GlcNAc...) asparagine glycosylation is present at N53. Zn(2+)-binding residues include D85, N117, H220, and H243. N311 and N333 each carry an N-linked (GlcNAc...) asparagine glycan. Cystine bridges form between C353-C358 and C365-C387. R354 contributes to the AMP binding site. Residue R354 coordinates IMP. AMP-binding residues include N390 and R395. The IMP site is built by N390 and R395. N-linked (GlcNAc...) asparagine glycosylation occurs at N403. F417 provides a ligand contact to AMP. F417 provides a ligand contact to IMP. Cysteines 476 and 479 form a disulfide. AMP-binding residues include F500 and D506. Residues F500 and D506 each contribute to the IMP site. The GPI-anchor amidated serine moiety is linked to residue S549. Residues A550 to Q574 constitute a propeptide, removed in mature form.

The protein belongs to the 5'-nucleotidase family. As to quaternary structure, homodimer. Requires Zn(2+) as cofactor.

The protein resides in the cell membrane. It carries out the reaction a ribonucleoside 5'-phosphate + H2O = a ribonucleoside + phosphate. It catalyses the reaction a 2'-deoxyribonucleoside 5'-phosphate + H2O = a 2'-deoxyribonucleoside + phosphate. The catalysed reaction is dTMP + H2O = thymidine + phosphate. The enzyme catalyses CMP + H2O = cytidine + phosphate. It carries out the reaction IMP + H2O = inosine + phosphate. It catalyses the reaction AMP + H2O = adenosine + phosphate. The catalysed reaction is GMP + H2O = guanosine + phosphate. The enzyme catalyses UMP + H2O = uridine + phosphate. It carries out the reaction dAMP + H2O = 2'-deoxyadenosine + phosphate. It catalyses the reaction dCMP + H2O = 2'-deoxycytidine + phosphate. In terms of biological role, catalyzes the hydrolysis of nucleotide monophosphates, releasing inorganic phosphate and the corresponding nucleoside, with AMP being the preferred substrate. Shows a preference for ribonucleotide monophosphates over their equivalent deoxyribose forms. Other substrates include IMP, UMP, GMP, CMP, dAMP, dCMP, dTMP, NAD and NMN. The sequence is that of 5'-nucleotidase (NT5E) from Bos taurus (Bovine).